The sequence spans 144 residues: uncharacterized protein (144 aa).

The tract at residues 1-24 (MGKVIQFPFGEEPEKKEEKELKTE) is disordered. Residues 12 to 24 (EPEKKEEKELKTE) are compositionally biased toward basic and acidic residues.

This is an uncharacterized protein from Aquifex aeolicus (strain VF5).